The sequence spans 616 residues: Zinc metalloproteinase nas-36 (616 aa).

The first 21 residues, 1-21, serve as a signal peptide directing secretion; the sequence is MRRFCRLLFLNSLLSISICKA. The propeptide occupies 22 to 125; the sequence is QNPAHLVADE…SKDKTKRLRR (104 aa). Residues 126-321 form the Peptidase M12A domain; the sequence is SFVSDKTATW…VATINTAYCK (196 aa). 9 cysteine pairs are disulfide-bonded: Cys168/Cys320, Cys191/Cys210, Cys324/Cys345, Cys347/Cys356, Cys367/Cys396, Cys424/Cys444, Cys518/Cys549, Cys522/Cys554, and Cys534/Cys539. Asn173 carries N-linked (GlcNAc...) asparagine glycosylation. Residue His218 participates in Zn(2+) binding. Residue Glu219 is part of the active site. Zn(2+) contacts are provided by His222 and His228. Residues 316-357 form the EGF-like domain; it reads NTAYCKEECKSEKTECEYGGYMRPSKCSECLCPDGLGGEKCE. The CUB domain maps to 367-481; that stretch reads CGGILELSDE…IGFKIQVRST (115 aa). The 50-residue stretch at 506–555 folds into the TSP type-1 domain; it reads PNVWADWGEWSMCSRTCGGCGIRSRVRSCRSKKCEGRRQEFGTCNLKACP.

Requires Zn(2+) as cofactor.

The protein resides in the secreted. Functionally, mtalloprotease. Involved in molting, a process during larval stages in which a new cuticle is formed and the old cuticle is shed. The polypeptide is Zinc metalloproteinase nas-36 (Caenorhabditis briggsae).